A 498-amino-acid polypeptide reads, in one-letter code: ATP synthase subunit beta, chloroplastic (498 aa).

Residue 172–179 (GGAGVGKT) coordinates ATP.

Belongs to the ATPase alpha/beta chains family. As to quaternary structure, F-type ATPases have 2 components, CF(1) - the catalytic core - and CF(0) - the membrane proton channel. CF(1) has five subunits: alpha(3), beta(3), gamma(1), delta(1), epsilon(1). CF(0) has four main subunits: a(1), b(1), b'(1) and c(9-12).

The protein resides in the plastid. It localises to the chloroplast thylakoid membrane. It carries out the reaction ATP + H2O + 4 H(+)(in) = ADP + phosphate + 5 H(+)(out). In terms of biological role, produces ATP from ADP in the presence of a proton gradient across the membrane. The catalytic sites are hosted primarily by the beta subunits. The protein is ATP synthase subunit beta, chloroplastic of Buxus microphylla (Littleleaf boxwood).